Consider the following 773-residue polypeptide: Transducin-like enhancer protein 4 (773 aa).

Disordered stretches follow at residues 1–22, 140–162, and 182–357; these read MIRD…QPAQ, HGHG…AIPP, and LPIK…DPLA. The tract at residues 1 to 136 is q domain; that stretch reads MIRDLSKMYP…AIIGQQLQAQ (136 aa). Residues 137 to 204 are GP domain; that stretch reads HLSHGHGLPV…HQRDRDSIKS (68 aa). Residues 183–202 show a composition bias toward basic and acidic residues; it reads PIKDEKKHHDNDHQRDRDSI. Over residues 203–214 the composition is skewed to low complexity; the sequence is KSSSVSPSASFR. Positions 205–274 are ccN domain; it reads SSVSPSASFR…SPRGSPAHSP (70 aa). Residues Ser208, Ser212, Ser216, and Ser222 each carry the phosphoserine modification. Residues 215–252 show a composition bias toward basic and acidic residues; sequence GSEKHRNSTDYSSESKKQKTEEKEIAARYDSDGEKSDD. Lys237 is modified (N6-acetyllysine). Ser245 is modified (phosphoserine). A Phosphoserine; by CK2 modification is found at Ser250. Ser265 bears the Phosphoserine; by CDK1 mark. Phosphoserine is present on residues Ser269 and Ser273. The segment covering 273-289 has biased composition (basic and acidic residues); the sequence is SPRENGLDKTRLLKKDA. An SP domain region spans residues 275–452; it reads RENGLDKTRL…PGGKPAYSFH (178 aa). Lys281 is subject to N6-acetyllysine. The span at 290–305 shows a compositional bias: low complexity; sequence PISPASVASSSSTPSS. Position 292 is a phosphoserine (Ser292). Residues 317-328 show a composition bias toward polar residues; it reads TTPVSKSNTPTP. Thr318 carries the post-translational modification Phosphothreonine. A phosphoserine mark is found at Ser321 and Ser323. Residues Thr325, Thr327, Thr334, and Thr340 each carry the phosphothreonine modification. Ser419 carries the post-translational modification Phosphoserine. WD repeat units lie at residues 485-523, 531-570, 575-614, 617-656, 658-697, 699-738, and 740-773; these read NHGE…NKSP, NRDN…PRIK, SSAP…LVRQ, GHTD…QLQQ, DFTS…KYQL, LHES…SIFQ, and KESS…EVIY.

Belongs to the WD repeat Groucho/TLE family. Homooligomer and heterooligomer with other family members. Interacts with PAX5. Interacts with LEF1, TCF7, TCF7L1 and TCF7L2. Interacts with ZNF703; TLE4 may mediate ZNF703 transcriptional repression. Interacts with SIX3 and SIX6. Interacts with PAX2. Interacts with TLE1. In terms of processing, phosphorylated. PAX5 binding increases phosphorylation. Ubiquitinated by XIAP/BIRC4. As to expression, expressed in bone marrow-derived macrophages.

Its subcellular location is the nucleus. Functionally, transcriptional corepressor that binds to a number of transcription factors. Inhibits the transcriptional activation mediated by PAX5, and by CTNNB1 and TCF family members in Wnt signaling. The effects of full-length TLE family members may be modulated by association with dominant-negative AES. Essential for the transcriptional repressor activity of SIX3 during retina and lens development and for SIX3 transcriptional auto-repression. Involved in transcriptional repression of GNRHR and enhances MSX1-mediated transcriptional repression of CGA/alpha-GSU. The sequence is that of Transducin-like enhancer protein 4 (Tle4) from Mus musculus (Mouse).